A 548-amino-acid chain; its full sequence is Acetamidase (548 aa).

Residues Lys129 and Ser204 each act as charge relay system in the active site. The Acyl-ester intermediate role is filled by Ser228.

This sequence belongs to the amidase family.

It catalyses the reaction a monocarboxylic acid amide + H2O = a monocarboxylate + NH4(+). The catalysed reaction is acetamide + H2O = acetate + NH4(+). Its function is as follows. Allows acetamide to be used as a sole carbon or nitrogen source. This Emericella nidulans (strain FGSC A4 / ATCC 38163 / CBS 112.46 / NRRL 194 / M139) (Aspergillus nidulans) protein is Acetamidase (amdS).